The sequence spans 398 residues: Leucine carboxyl methyltransferase 1 (398 aa).

Residues 1 to 11 (MSASQIPNLNT) are compositionally biased toward polar residues. The segment at 1 to 54 (MSASQIPNLNTLRRGGGRGRLRGRGGFETGAPSEDRHGSRGLAAQDRVVQGTDN) is disordered. Residues Arg-97, Gly-123, Asp-151, and 201-202 (DL) contribute to the S-adenosyl-L-methionine site. Over residues 208 to 218 (SGSATTSRSPS) the composition is skewed to low complexity. Residues 208–232 (SGSATTSRSPSSPNPAEKDQPPCPL) are disordered. An S-adenosyl-L-methionine-binding site is contributed by Glu-246.

This sequence belongs to the methyltransferase superfamily. LCMT family.

The catalysed reaction is [phosphatase 2A protein]-C-terminal L-leucine + S-adenosyl-L-methionine = [phosphatase 2A protein]-C-terminal L-leucine methyl ester + S-adenosyl-L-homocysteine. In terms of biological role, methylates the carboxyl group of the C-terminal leucine residue of protein phosphatase 2A catalytic subunits to form alpha-leucine ester residues. The sequence is that of Leucine carboxyl methyltransferase 1 (ppm1) from Aspergillus fumigatus (strain ATCC MYA-4609 / CBS 101355 / FGSC A1100 / Af293) (Neosartorya fumigata).